A 1372-amino-acid polypeptide reads, in one-letter code: DNA-directed RNA polymerase subunit beta' (1372 aa).

Residues C69, C71, C84, and C87 each coordinate Zn(2+). The Mg(2+) site is built by D460, D462, and D464. Zn(2+) is bound by residues C808, C882, C889, and C892.

Belongs to the RNA polymerase beta' chain family. As to quaternary structure, the RNAP catalytic core consists of 2 alpha, 1 beta, 1 beta' and 1 omega subunit. When a sigma factor is associated with the core the holoenzyme is formed, which can initiate transcription. Mg(2+) is required as a cofactor. The cofactor is Zn(2+).

It carries out the reaction RNA(n) + a ribonucleoside 5'-triphosphate = RNA(n+1) + diphosphate. In terms of biological role, DNA-dependent RNA polymerase catalyzes the transcription of DNA into RNA using the four ribonucleoside triphosphates as substrates. The chain is DNA-directed RNA polymerase subunit beta' from Rickettsia akari (strain Hartford).